Here is a 393-residue protein sequence, read N- to C-terminus: NAD(P)H-quinone oxidoreductase subunit H, chloroplastic (393 aa).

This sequence belongs to the complex I 49 kDa subunit family. NDH is composed of at least 16 different subunits, 5 of which are encoded in the nucleus.

Its subcellular location is the plastid. It localises to the chloroplast thylakoid membrane. It catalyses the reaction a plastoquinone + NADH + (n+1) H(+)(in) = a plastoquinol + NAD(+) + n H(+)(out). It carries out the reaction a plastoquinone + NADPH + (n+1) H(+)(in) = a plastoquinol + NADP(+) + n H(+)(out). Its function is as follows. NDH shuttles electrons from NAD(P)H:plastoquinone, via FMN and iron-sulfur (Fe-S) centers, to quinones in the photosynthetic chain and possibly in a chloroplast respiratory chain. The immediate electron acceptor for the enzyme in this species is believed to be plastoquinone. Couples the redox reaction to proton translocation, and thus conserves the redox energy in a proton gradient. The chain is NAD(P)H-quinone oxidoreductase subunit H, chloroplastic from Oenothera argillicola (Appalachian evening primrose).